The chain runs to 228 residues: Ribosomal RNA small subunit methyltransferase G (228 aa).

S-adenosyl-L-methionine-binding positions include G70, 121 to 122, and R138; that span reads AE.

Belongs to the methyltransferase superfamily. RNA methyltransferase RsmG family.

The protein resides in the cytoplasm. Functionally, specifically methylates the N7 position of a guanine in 16S rRNA. This is Ribosomal RNA small subunit methyltransferase G from Thermotoga sp. (strain RQ2).